Here is a 115-residue protein sequence, read N- to C-terminus: Virulence-associated protein A' (115 aa).

An HTH cro/C1-type domain is found at isoleucine 16–phenylalanine 70. Residues isoleucine 27–asparagine 46 constitute a DNA-binding region (H-T-H motif).

This sequence belongs to the VapA/VapI family.

This chain is Virulence-associated protein A' (vapA'), found in Dichelobacter nodosus (Bacteroides nodosus).